The sequence spans 420 residues: MKIATLSIGDELIFGEVVDTNAAHISERLYSVGFKVQRQLTVGDNEQDIVEAIEMLAVKCDVVVVTGGLGPTVDDITARSAAKITGHELVLNEEALARLQRFSEKLGGNLHPSNEKQALMPANATLIPNPVGTACGFYLTHNGRFLFFLPGVPGEMACMLDETVIPFIVSRVKRRTFLQTKVFKVFGPSEAEVDALMDGVADEAAGVSVAFCVNFPEIQVKLRVEGHEEAVVAELLTRAGDKARQRLNGYVFAEDGETIDTVVASLFRETGFTLSLAESCTGGLVAKRITDIPGSSAYFLEGIVTYSNTAKTQLLDVPQRLLDEKGAVSSEVAVAMALGARKLSGSDIALAVTGIAGPDGGTAEKPVGTVYMALAGSNGCQAKRYTFHGDREEIRLITSFMAMDWLRKRLLSLRSAEVTD.

It belongs to the CinA family.

The protein is CinA-like protein of Geotalea uraniireducens (strain Rf4) (Geobacter uraniireducens).